Consider the following 328-residue polypeptide: Lipoate--protein ligase 1 (328 aa).

One can recognise a BPL/LPL catalytic domain in the interval 27 to 214; the sequence is PAEESYFLFY…TIFGETEVEE (188 aa). ATP is bound by residues R69, 74–77, and K131; that span reads GAVY. K131 serves as a coordination point for (R)-lipoate.

The enzyme catalyses L-lysyl-[lipoyl-carrier protein] + (R)-lipoate + ATP = N(6)-[(R)-lipoyl]-L-lysyl-[lipoyl-carrier protein] + AMP + diphosphate + H(+). The protein operates within protein modification; protein lipoylation via exogenous pathway; protein N(6)-(lipoyl)lysine from lipoate: step 1/2. It functions in the pathway protein modification; protein lipoylation via exogenous pathway; protein N(6)-(lipoyl)lysine from lipoate: step 2/2. Catalyzes the lipoylation of proteins, such as GcvH (SAV0833) and GcvH-L (SAV0324), likely via the ATP-dependent activation of lipoate to lipoyl-AMP and the transfer of the activated lipoyl onto the lipoyl domain of the target protein. This chain is Lipoate--protein ligase 1, found in Staphylococcus aureus (strain Mu50 / ATCC 700699).